The sequence spans 466 residues: ATP synthase subunit beta (466 aa).

Residue 152 to 159 (GGAGVGKT) coordinates ATP.

The protein belongs to the ATPase alpha/beta chains family. F-type ATPases have 2 components, CF(1) - the catalytic core - and CF(0) - the membrane proton channel. CF(1) has five subunits: alpha(3), beta(3), gamma(1), delta(1), epsilon(1). CF(0) has three main subunits: a(1), b(2) and c(9-12). The alpha and beta chains form an alternating ring which encloses part of the gamma chain. CF(1) is attached to CF(0) by a central stalk formed by the gamma and epsilon chains, while a peripheral stalk is formed by the delta and b chains.

It localises to the cell inner membrane. It catalyses the reaction ATP + H2O + 4 H(+)(in) = ADP + phosphate + 5 H(+)(out). In terms of biological role, produces ATP from ADP in the presence of a proton gradient across the membrane. The catalytic sites are hosted primarily by the beta subunits. In Helicobacter pylori (strain HPAG1), this protein is ATP synthase subunit beta.